The following is a 351-amino-acid chain: Lipoyl synthase (351 aa).

Over residues 1 to 10 (MNDSGNSSKV) the composition is skewed to polar residues. The segment at 1 to 27 (MNDSGNSSKVNVRPPSAGLGAPSPGKR) is disordered. A compositionally biased stretch (low complexity) spans 14 to 24 (PPSAGLGAPSP). The [4Fe-4S] cluster site is built by Cys-74, Cys-79, Cys-85, Cys-100, Cys-104, Cys-107, and Ser-311. The region spanning 86–300 (WEDREATFLI…KEQAKEIGFS (215 aa)) is the Radical SAM core domain.

It belongs to the radical SAM superfamily. Lipoyl synthase family. It depends on [4Fe-4S] cluster as a cofactor.

It localises to the cytoplasm. The catalysed reaction is [[Fe-S] cluster scaffold protein carrying a second [4Fe-4S](2+) cluster] + N(6)-octanoyl-L-lysyl-[protein] + 2 oxidized [2Fe-2S]-[ferredoxin] + 2 S-adenosyl-L-methionine + 4 H(+) = [[Fe-S] cluster scaffold protein] + N(6)-[(R)-dihydrolipoyl]-L-lysyl-[protein] + 4 Fe(3+) + 2 hydrogen sulfide + 2 5'-deoxyadenosine + 2 L-methionine + 2 reduced [2Fe-2S]-[ferredoxin]. It functions in the pathway protein modification; protein lipoylation via endogenous pathway; protein N(6)-(lipoyl)lysine from octanoyl-[acyl-carrier-protein]: step 2/2. In terms of biological role, catalyzes the radical-mediated insertion of two sulfur atoms into the C-6 and C-8 positions of the octanoyl moiety bound to the lipoyl domains of lipoate-dependent enzymes, thereby converting the octanoylated domains into lipoylated derivatives. In Tropheryma whipplei (strain TW08/27) (Whipple's bacillus), this protein is Lipoyl synthase.